The following is a 243-amino-acid chain: Outer membrane protein A (243 aa).

Beta stranded transmembrane passes span 1–8 (LAAKLSYP), 13–21 (LDIYTRLGG), 48–57 (PLAAVGVEYA), 62–69 (WATRLDYQ), and 88–96 (MLSLGVSYR). Tandem repeats lie at residues 104–105 (AP), 106–107 (AP), 108–109 (AP), 110–111 (AP), and 112–113 (AP). Residues 104 to 113 (APAPAPAPAP) are 5 X 2 AA tandem repeats of A-P. Residues 115-243 (VETKLFTLKS…RRVEIEVKGI (129 aa)) enclose the OmpA-like domain. Cys215 and Cys229 are disulfide-bonded.

This sequence belongs to the outer membrane OOP (TC 1.B.6) superfamily. OmpA family. Monomer and homodimer.

It localises to the cell outer membrane. With TolR probably plays a role in maintaining the position of the peptidoglycan cell wall in the periplasm. Acts as a porin with low permeability that allows slow penetration of small solutes; an internal gate slows down solute passage. The chain is Outer membrane protein A from Serratia odorifera.